Here is a 574-residue protein sequence, read N- to C-terminus: 2-succinyl-5-enolpyruvyl-6-hydroxy-3-cyclohexene-1-carboxylate synthase (574 aa).

It belongs to the TPP enzyme family. MenD subfamily. Homodimer. It depends on Mg(2+) as a cofactor. The cofactor is Mn(2+). Requires thiamine diphosphate as cofactor.

The catalysed reaction is isochorismate + 2-oxoglutarate + H(+) = 5-enolpyruvoyl-6-hydroxy-2-succinyl-cyclohex-3-ene-1-carboxylate + CO2. Its pathway is quinol/quinone metabolism; 1,4-dihydroxy-2-naphthoate biosynthesis; 1,4-dihydroxy-2-naphthoate from chorismate: step 2/7. It participates in quinol/quinone metabolism; menaquinone biosynthesis. Its function is as follows. Catalyzes the thiamine diphosphate-dependent decarboxylation of 2-oxoglutarate and the subsequent addition of the resulting succinic semialdehyde-thiamine pyrophosphate anion to isochorismate to yield 2-succinyl-5-enolpyruvyl-6-hydroxy-3-cyclohexene-1-carboxylate (SEPHCHC). In Rubrobacter xylanophilus (strain DSM 9941 / JCM 11954 / NBRC 16129 / PRD-1), this protein is 2-succinyl-5-enolpyruvyl-6-hydroxy-3-cyclohexene-1-carboxylate synthase.